A 688-amino-acid polypeptide reads, in one-letter code: DNA ligase (688 aa).

NAD(+) is bound by residues 51-55, 100-101, and E129; these read DSEYD and SL. K131 serves as the catalytic N6-AMP-lysine intermediate. 4 residues coordinate NAD(+): R152, E189, K308, and K332. Zn(2+) is bound by residues C426, C429, C444, and C450. Residues 609-688 form the BRCT domain; that stretch reads ADEQPLKGQT…DELLALLANS (80 aa).

This sequence belongs to the NAD-dependent DNA ligase family. LigA subfamily. The cofactor is Mg(2+). Mn(2+) is required as a cofactor.

It carries out the reaction NAD(+) + (deoxyribonucleotide)n-3'-hydroxyl + 5'-phospho-(deoxyribonucleotide)m = (deoxyribonucleotide)n+m + AMP + beta-nicotinamide D-nucleotide.. DNA ligase that catalyzes the formation of phosphodiester linkages between 5'-phosphoryl and 3'-hydroxyl groups in double-stranded DNA using NAD as a coenzyme and as the energy source for the reaction. It is essential for DNA replication and repair of damaged DNA. The protein is DNA ligase of Shewanella sp. (strain MR-4).